We begin with the raw amino-acid sequence, 467 residues long: Mitogen-activated protein kinase kinase kinase 8 (467 aa).

Thr80 is modified (phosphothreonine). Phosphoserine occurs at positions 138 and 141. ATP is bound by residues 144 to 152 (VPRGAFGKV) and Lys167. Positions 146–388 (RGAFGKVYLA…AADLLKHEAL (243 aa)) constitute a Protein kinase domain. Catalysis depends on Asp253, which acts as the Proton acceptor. A Phosphothreonine modification is found at Thr290. 2 positions are modified to phosphoserine: Ser400 and Ser443.

The protein belongs to the protein kinase superfamily. STE Ser/Thr protein kinase family. MAP kinase kinase kinase subfamily. Forms a ternary complex with NFKB1/p105 and TNIP2. Interacts with NFKB1; the interaction increases the stability of MAP3K8 but inhibits its MEK phosphorylation activity, whereas loss of interaction following LPS stimulation leads to its degradation. Interacts with CD40 and TRAF6; the interaction is required for ERK activation. Interacts with KSR2; the interaction inhibits ERK and NF-kappa-B activation. Requires Mg(2+) as cofactor. Autophosphorylated. In terms of tissue distribution, expressed in spleen, thymus, liver and lung.

The protein localises to the cytoplasm. It catalyses the reaction L-seryl-[protein] + ATP = O-phospho-L-seryl-[protein] + ADP + H(+). It carries out the reaction L-threonyl-[protein] + ATP = O-phospho-L-threonyl-[protein] + ADP + H(+). Functionally, required for lipopolysaccharide (LPS)-induced, TLR4-mediated activation of the MAPK/ERK pathway in macrophages, thus being critical for production of the pro-inflammatory cytokine TNF-alpha (TNF) during immune responses. Involved in the regulation of T-helper cell differentiation and IFNG expression in T-cells. Involved in mediating host resistance to bacterial infection through negative regulation of type I interferon (IFN) production. Transduces CD40 and TNFRSF1A signals that activate ERK in B-cells and macrophages, and thus may play a role in the regulation of immunoglobulin production. May also play a role in the transduction of TNF signals that activate JNK and NF-kappa-B in some cell types. In adipocytes, activates MAPK/ERK pathway in an IKBKB-dependent manner in response to IL1B and TNF, but not insulin, leading to induction of lipolysis. Plays a role in the cell cycle. This chain is Mitogen-activated protein kinase kinase kinase 8 (Map3k8), found in Rattus norvegicus (Rat).